The sequence spans 579 residues: MASFKLPELQPDNDLWGPASGSNALPAELKDIPFAPYAKNDKVGRIADWNNASGASNDAANARGGRQGRARDVQQNFGTSAASSAFAYFHGDDEASFSVVDNTRTVASRRGGLGQMSQRGGRGGRGGAGGAGAAGGRGASKFGAGAGRGARGGRGGAAGARRGGGRFGWKEWDKPQRIREASVTVGQDWEQVEEIDFVRLGKLRLEVEEPQDISSYGSLFEYDRSYDRVTVKTAQSLSSIDRIRYNTTTSEDPVIHDISAKEDAQIYMTDSILALLMCATRSVYSWDVIITKTADGKVFFDKRDGGAFDYLTVNENAADPPSEASEGKENEAAAKANAINTPSALSLEATYINQNFAFQVVNEKNVYKLEHENPFYSSDETAPLASCAYRYRKFNLSSEESDPVELVVRTEVDAYTVGASKEKQLITIKSLNEFDARAQGAGGALDWRLKLDSQRGAVVATEMKNNSFKLARFAVQSLLAGADSMKLGYISRANPKDTSRHMILGTSWLKPRELAAQMAVNLSNGWGIVRTVADLARKAEQGKYVLLKDPNKQTIRMYRVPANFGEENDEIVEEDEADE.

Disordered regions lie at residues Met1–Ser20, Asn51–Asp72, and Arg109–Lys170. Residues Asn51–Gly64 are compositionally biased toward low complexity. Residues Gly120–Phe167 are compositionally biased toward gly residues. Residues Ala307–Pro321 are RNA gate.

It belongs to the eIF-3 subunit D family. In terms of assembly, component of the eukaryotic translation initiation factor 3 (eIF-3) complex.

It is found in the cytoplasm. MRNA cap-binding component of the eukaryotic translation initiation factor 3 (eIF-3) complex, which is involved in protein synthesis of a specialized repertoire of mRNAs and, together with other initiation factors, stimulates binding of mRNA and methionyl-tRNAi to the 40S ribosome. The eIF-3 complex specifically targets and initiates translation of a subset of mRNAs involved in cell proliferation. In the eIF-3 complex, eif3d specifically recognizes and binds the 7-methylguanosine cap of a subset of mRNAs. The chain is Eukaryotic translation initiation factor 3 subunit D from Mycosarcoma maydis (Corn smut fungus).